We begin with the raw amino-acid sequence, 144 residues long: Ninjurin-2 (144 aa).

Residues 1 to 62 (MESDREIIHL…KSVLEQGPFS (62 aa)) lie on the Extracellular side of the membrane. The interval 27-39 (NHYATKKSVAESM) is helix alpha1. The interval 40 to 59 (LDVALFMSNAMRLKSVLEQG) is helix alpha2. Residues 63–94 (QYYTTLLTLISASLLLQVVIGILLVVIARLNL) traverse the membrane as a helical segment. The Cytoplasmic portion of the chain corresponds to 95 to 98 (NEVE). A helical transmembrane segment spans residues 99-128 (NQWRLNQLNNAATTLVFITVVINIFITAFG). Residue glutamine 105 participates in cholesterol binding. At 129 to 144 (AHKTGSVAARTSSNPI) the chain is on the extracellular side.

Belongs to the ninjurin family. In terms of assembly, homooligomer; in response to stimuli, homooligomerizes into filaments. In contrast to NINJ1, the filament is curved toward the intracellular space, preventing its circularization on a relatively flat membrane to mediate plasma membrane rupture: curvature is caused by cholesterol-binding at the cytoplasmic leaflet.

It is found in the cell membrane. In terms of biological role, its role in unclear. In contrast to NINJ1 paralog, does not mediate plasma membrane rupture (cytolysis) downstream of necroptotic and pyroptotic programmed cell death. While it is able to oligomerize and form filaments, filaments are curved toward the intracellular space, preventing circularization to mediate plasma membrane rupture. May act as a homophilic transmembrane adhesion molecule involved in nerve regeneration. Promotes axonal growth. The polypeptide is Ninjurin-2 (Ninj2) (Rattus norvegicus (Rat)).